The chain runs to 349 residues: Phenylalanine--tRNA ligase alpha subunit (349 aa).

Glu-258 contacts Mg(2+).

This sequence belongs to the class-II aminoacyl-tRNA synthetase family. Phe-tRNA synthetase alpha subunit type 1 subfamily. As to quaternary structure, tetramer of two alpha and two beta subunits. It depends on Mg(2+) as a cofactor.

The protein resides in the cytoplasm. The catalysed reaction is tRNA(Phe) + L-phenylalanine + ATP = L-phenylalanyl-tRNA(Phe) + AMP + diphosphate + H(+). The polypeptide is Phenylalanine--tRNA ligase alpha subunit (Rickettsia akari (strain Hartford)).